The following is a 517-amino-acid chain: 2,3-bisphosphoglycerate-independent phosphoglycerate mutase (517 aa).

The Mn(2+) site is built by aspartate 14 and serine 64. Serine 64 functions as the Phosphoserine intermediate in the catalytic mechanism. Substrate-binding positions include histidine 125, arginine 155–aspartate 156, arginine 187, arginine 193, arginine 259–arginine 262, and lysine 334. Mn(2+) is bound by residues aspartate 401, histidine 405, aspartate 442, histidine 443, and histidine 461.

The protein belongs to the BPG-independent phosphoglycerate mutase family. In terms of assembly, monomer. Requires Mn(2+) as cofactor.

The catalysed reaction is (2R)-2-phosphoglycerate = (2R)-3-phosphoglycerate. It participates in carbohydrate degradation; glycolysis; pyruvate from D-glyceraldehyde 3-phosphate: step 3/5. Functionally, catalyzes the interconversion of 2-phosphoglycerate and 3-phosphoglycerate. In Symbiobacterium thermophilum (strain DSM 24528 / JCM 14929 / IAM 14863 / T), this protein is 2,3-bisphosphoglycerate-independent phosphoglycerate mutase.